The primary structure comprises 640 residues: Protein SPT10 (640 aa).

The tract at residues 1–30 (MLNQHTSSVPDDEHLQMAHQNSSSEVRNEA) is disordered. The N-acetyltransferase domain maps to 121-259 (LDYSMDTEAD…AGILKGFDVP (139 aa)). Residues 534-565 (PHLTNNESQDHANPVNRDERDMNHSVPDLDRN) form a disordered region. The segment covering 549 to 565 (NRDERDMNHSVPDLDRN) has biased composition (basic and acidic residues).

Required for normal transcription at a number of loci in yeast. Affects transcription at Ty1 elements, at PHO5, STE6 and ADH2. The polypeptide is Protein SPT10 (SPT10) (Saccharomyces cerevisiae (strain ATCC 204508 / S288c) (Baker's yeast)).